A 557-amino-acid chain; its full sequence is GMP synthase [glutamine-hydrolyzing] (557 aa).

One can recognise a Glutamine amidotransferase type-1 domain in the interval 13–209; it reads TILTLDFGSQ…AVDICGANPN (197 aa). Cysteine 89 (nucleophile) is an active-site residue. Catalysis depends on residues histidine 183 and glutamate 185. Positions 210–414 constitute a GMPS ATP-PPase domain; sequence WTMSKFVDQE…LGIAHELVMR (205 aa). 238–244 is a binding site for ATP; the sequence is SGGVDST. Arginine 311, aspartate 476, lysine 549, and glutamate 555 together coordinate XMP.

As to quaternary structure, homodimer. Mg(2+) is required as a cofactor.

The protein localises to the cytoplasm. Its subcellular location is the cytosol. The catalysed reaction is XMP + L-glutamine + ATP + H2O = GMP + L-glutamate + AMP + diphosphate + 2 H(+). It functions in the pathway purine metabolism; GMP biosynthesis; GMP from XMP (L-Gln route): step 1/1. Inhibited by 6-diazo-5-oxo-l-norleucine (DON) and acivicin (ACI). In terms of biological role, catalyzes the conversion of xanthine monophosphate (XMP) to GMP in the presence of glutamine and ATP through an adenyl-XMP intermediate. In Aspergillus fumigatus (strain ATCC MYA-4609 / CBS 101355 / FGSC A1100 / Af293) (Neosartorya fumigata), this protein is GMP synthase [glutamine-hydrolyzing] (gua1).